Consider the following 592-residue polypeptide: E3 ubiquitin-protein ligase RNF180 (592 aa).

The Cytoplasmic segment spans residues 1 to 564; that stretch reads MKRSEESTST…DSRGWWFDMD (564 aa). The residue at position 231 (Ser231) is a Phosphoserine. The interval 282 to 489 is interaction with ZIC2; the sequence is QSPPSFDPNM…VFLQTELNNA (208 aa). The RING-type zinc finger occupies 432–474; the sequence is CAVCLDVYFNPYMCYPCHHIFCEPCLRTLAKDNPASTPCPLCR. A helical membrane pass occupies residues 565-585; the sequence is MVIIYIYSVNWVIGFVVFCFL. Residues 586 to 592 are Extracellular-facing; that stretch reads CYFFFPF.

Interacts with ZIC2. Brain, kidney, testis and uterus. membrane protein. Nucleus envelope.

The protein localises to the endoplasmic reticulum membrane. Its subcellular location is the nucleus envelope. The catalysed reaction is S-ubiquitinyl-[E2 ubiquitin-conjugating enzyme]-L-cysteine + [acceptor protein]-L-lysine = [E2 ubiquitin-conjugating enzyme]-L-cysteine + N(6)-ubiquitinyl-[acceptor protein]-L-lysine.. The protein operates within protein modification; protein ubiquitination. Its function is as follows. E3 ubiquitin-protein ligase which promotes polyubiquitination and degradation by the proteasome pathway of ZIC2. This Mus musculus (Mouse) protein is E3 ubiquitin-protein ligase RNF180 (Rnf180).